The sequence spans 200 residues: Probable nicotinate-nucleotide adenylyltransferase (200 aa).

This sequence belongs to the NadD family.

It catalyses the reaction nicotinate beta-D-ribonucleotide + ATP + H(+) = deamido-NAD(+) + diphosphate. It functions in the pathway cofactor biosynthesis; NAD(+) biosynthesis; deamido-NAD(+) from nicotinate D-ribonucleotide: step 1/1. Catalyzes the reversible adenylation of nicotinate mononucleotide (NaMN) to nicotinic acid adenine dinucleotide (NaAD). This is Probable nicotinate-nucleotide adenylyltransferase from Clostridium novyi (strain NT).